The primary structure comprises 470 residues: MAKGDKINFSTPSGFPEFLPSEKRLELYLLDIIRRVFESYGFTPIETPAVERLEVLQAKGNQGDNIIYGIDPILPPNRQAEKDKSGETGKDKSGETGSEARALKFDQTVPLAAYIARHLNELIFPFARYQTDMVFRGERAKDGRFRQFRQCDIDVVARRELSLLYDAQMPAIITEIFEAINIGDFLIRINNRKVLTGFFKSVGITEDKIKSCINIVDNLEKIGESKVKQELEKEGVSGEQTQKIIDFIKIDGSVDEVLDKLKHLTLNLPETEQLSLGISELETVIAGVRNLGVTENRFCIDLSIARGLDYYTGTVYETTLLGHEALGSICSGGRYEELVGVFLGEKMPGVGISIGLTRLISRLLKAGILSTLAATPAQVMVVNMQEDLMPTYLKVSQHLRQAGINVITNFDKRPLGKQFQLADKQGIQFCVIIGSEEAAAQKSSLKDLKSGEQVEVLLVNLAEEVKRRLS.

The segment at 69-99 (GIDPILPPNRQAEKDKSGETGKDKSGETGSE) is disordered. Residues 79 to 94 (QAEKDKSGETGKDKSG) show a composition bias toward basic and acidic residues.

It belongs to the class-II aminoacyl-tRNA synthetase family. Homodimer.

It is found in the cytoplasm. The catalysed reaction is tRNA(His) + L-histidine + ATP = L-histidyl-tRNA(His) + AMP + diphosphate + H(+). The protein is Histidine--tRNA ligase of Nostoc punctiforme (strain ATCC 29133 / PCC 73102).